Reading from the N-terminus, the 865-residue chain is Eukaryotic translation initiation factor 3 subunit C (865 aa).

2 disordered regions span residues 1 to 92 and 206 to 243; these read MSRF…AKDK and EDEE…VGKG. Composition is skewed to acidic residues over residues 16–54 and 69–80; these read SSDE…DSDA and DDDSSDEEDSDA. The segment covering 82-92 has biased composition (basic and acidic residues); the sequence is VTTKVKSAKDK. Positions 226-235 are enriched in acidic residues; sequence ATAEDEEDDE. Positions 606-780 constitute a PCI domain; it reads FHMHINLELL…QTVIFRKGVE (175 aa). The disordered stretch occupies residues 801–865; the sequence is SNERTLEQRT…GGALGAAVRA (65 aa). Positions 808–817 are enriched in polar residues; the sequence is QRTQGTSNAF. The span at 822 to 841 shows a compositional bias: gly residues; that stretch reads GRGGRGGGRGRGGGRGGPRF.

It belongs to the eIF-3 subunit C family. As to quaternary structure, component of the eukaryotic translation initiation factor 3 (eIF-3) complex.

It localises to the cytoplasm. Functionally, component of the eukaryotic translation initiation factor 3 (eIF-3) complex, which is involved in protein synthesis of a specialized repertoire of mRNAs and, together with other initiation factors, stimulates binding of mRNA and methionyl-tRNAi to the 40S ribosome. The eIF-3 complex specifically targets and initiates translation of a subset of mRNAs involved in cell proliferation. The chain is Eukaryotic translation initiation factor 3 subunit C from Pyricularia oryzae (strain 70-15 / ATCC MYA-4617 / FGSC 8958) (Rice blast fungus).